The following is a 463-amino-acid chain: Argininosuccinate lyase (463 aa).

This sequence belongs to the lyase 1 family. Argininosuccinate lyase subfamily.

It localises to the cytoplasm. The catalysed reaction is 2-(N(omega)-L-arginino)succinate = fumarate + L-arginine. The protein operates within amino-acid biosynthesis; L-arginine biosynthesis; L-arginine from L-ornithine and carbamoyl phosphate: step 3/3. This chain is Argininosuccinate lyase, found in Chlorobaculum tepidum (strain ATCC 49652 / DSM 12025 / NBRC 103806 / TLS) (Chlorobium tepidum).